The sequence spans 414 residues: MSFTIQTVTFTAPQPLGALPDSRGRFGRFGGQYVPETLMSALAQLEAAFNQYRHDPQFLAEFAGHLRDFVGRPTPLYFAERLTAHWGGGRIFLKREDLNHTGAHKINNALGQALLALRMGKRRIIAETGAGQHGVATATVCARFGLECIIYMGVHDIERQKLNVYRMKLLGAEVRPVAAGTGTLKDATSEAIRDWVTHVETTHYILGSAAGPHPYPLMVREFQAVIGRETRVQCLERLGRLPDVLIACVGGGSNAIGLFHDFLDERAVRLVGIEAAGEGIETGKHAATLTAGRAGVLHGAMSYVLQDEQGQVQEAHSLSAGLDYPGVGPEHSYLKDIGRAEYYSVTDSEALAALSLVCSTEGIIPALETAHAFAYLGILASQLHSEQIVVLNCSGRGDKDMGTVARAMGWGKEE.

N6-(pyridoxal phosphate)lysine is present on Lys-105.

It belongs to the TrpB family. As to quaternary structure, tetramer of two alpha and two beta chains. Requires pyridoxal 5'-phosphate as cofactor.

The enzyme catalyses (1S,2R)-1-C-(indol-3-yl)glycerol 3-phosphate + L-serine = D-glyceraldehyde 3-phosphate + L-tryptophan + H2O. It participates in amino-acid biosynthesis; L-tryptophan biosynthesis; L-tryptophan from chorismate: step 5/5. Functionally, the beta subunit is responsible for the synthesis of L-tryptophan from indole and L-serine. This is Tryptophan synthase beta chain from Gloeobacter violaceus (strain ATCC 29082 / PCC 7421).